A 1012-amino-acid polypeptide reads, in one-letter code: Structural polyprotein (1012 aa).

Asp-30 lines the a divalent metal cation pocket. Residues 513 to 755 (ADKGYEVVAN…AGRQYDLAMA (243 aa)) form the Peptidase S50 domain. The active-site Nucleophile is Ser-652. Lys-692 is an active-site residue. Residues 971-1012 (EMKHRNPRRAPPKPKPKPNVPTQRPPGRLGRWIRAVSDEDLE) are disordered. The segment covering 975–986 (RNPRRAPPKPKP) has biased composition (basic residues). An interaction with VP1 protein region spans residues 1003–1012 (IRAVSDEDLE).

Homotrimer. A central divalent metal stabilizes the VP2 trimer. Interacts with host ITGA4/ITGB1. As to quaternary structure, homodimer. Interacts (via C-terminus) with VP1 in the cytoplasm. Interacts with VP2. Post-translationally, specific enzymatic cleavages yield mature proteins. The capsid assembly seems to be regulated by polyprotein processing. The protease VP4 cleaves itself off the polyprotein, thus releasing pre-VP2 and VP3 within the infected cell. During capsid assembly, the C-terminus of pre-VP2 is further processed by VP4, giving rise to VP2, the external capsid protein and three small peptides that all stay closely associated with the capsid.

The protein resides in the virion. The protein localises to the host cytoplasm. Its function is as follows. Capsid protein VP2 self assembles to form an icosahedral capsid with a T=13 symmetry, about 70 nm in diameter, and consisting of 260 VP2 trimers. The capsid encapsulates the genomic dsRNA. VP2 is also involved in attachment and entry into the host cell by interacting with host ITGA4/ITGB1. The precursor of VP2 plays an important role in capsid assembly. First, pre-VP2 and VP2 oligomers assemble to form a procapsid. Then, the pre-VP2 intermediates may be processed into VP2 proteins by proteolytic cleavage mediated by VP4 to obtain the mature virion. The final capsid is composed of pentamers and hexamers but VP2 has a natural tendency to assemble into all-pentameric structures. Therefore pre-VP2 may be required to allow formation of the hexameric structures. In terms of biological role, protease VP4 is a serine protease that cleaves the polyprotein into its final products. Pre-VP2 is first partially cleaved, and may be completely processed by VP4 upon capsid maturation. Functionally, capsid protein VP3 plays a key role in virion assembly by providing a scaffold for the capsid made of VP2. May self-assemble to form a T=4-like icosahedral inner-capsid composed of at least 180 trimers. Plays a role in genomic RNA packaging by recruiting VP1 into the capsid and interacting with the dsRNA genome segments to form a ribonucleoprotein complex. Additionally, the interaction of the VP3 C-terminal tail with VP1 removes the inherent structural blockade of the polymerase active site. Thus, VP3 can also function as a transcriptional activator. Its function is as follows. Structural peptide 1 is a small peptide derived from pre-VP2 C-terminus. It destabilizes and perforates cell membranes, suggesting a role during entry. Structural peptide 2 is a small peptide derived from pre-VP2 C-terminus. It is not essential for the virus viability, but viral growth is affected when missing. In terms of biological role, structural peptide 3 is a small peptide derived from pre-VP2 C-terminus. It is not essential for the virus viability, but viral growth is affected when missing. In Avian infectious bursal disease virus (isolate Chicken/UK/UK661/1989) (IBDV), this protein is Structural polyprotein.